We begin with the raw amino-acid sequence, 471 residues long: Ribulose bisphosphate carboxylase large chain (471 aa).

The residue at position 5 (Lys-5) is an N6,N6,N6-trimethyllysine. The substrate site is built by Asn-114 and Thr-164. Lys-166 serves as the catalytic Proton acceptor. Lys-168 is a binding site for substrate. Mg(2+)-binding residues include Lys-192, Asp-194, and Glu-195. Lys-192 bears the N6-carboxylysine mark. The Proton acceptor role is filled by His-285. 3 residues coordinate substrate: Arg-286, His-318, and Ser-370.

The protein belongs to the RuBisCO large chain family. Type I subfamily. In terms of assembly, heterohexadecamer of 8 large chains and 8 small chains; disulfide-linked. The disulfide link is formed within the large subunit homodimers. It depends on Mg(2+) as a cofactor. In terms of processing, the disulfide bond which can form in the large chain dimeric partners within the hexadecamer appears to be associated with oxidative stress and protein turnover.

The protein localises to the plastid. It localises to the chloroplast. The enzyme catalyses 2 (2R)-3-phosphoglycerate + 2 H(+) = D-ribulose 1,5-bisphosphate + CO2 + H2O. It carries out the reaction D-ribulose 1,5-bisphosphate + O2 = 2-phosphoglycolate + (2R)-3-phosphoglycerate + 2 H(+). RuBisCO catalyzes two reactions: the carboxylation of D-ribulose 1,5-bisphosphate, the primary event in carbon dioxide fixation, as well as the oxidative fragmentation of the pentose substrate in the photorespiration process. Both reactions occur simultaneously and in competition at the same active site. This is Ribulose bisphosphate carboxylase large chain from Chiococca alba (West Indian milkberry).